The sequence spans 589 residues: ATP-dependent ubiquitin transferase-like protein Cap2 (589 aa).

C13 participates in a covalent cross-link: Glycyl cysteine dithioester (Cys-Gly) (interchain with G-Cter in DncV). Residue K77 forms a Glycyl lysine isopeptide (Lys-Gly) (interchain with G-Cter in DncV) linkage. The active-site For E2-like domain is the C91. Residues K305, K387, and K484 each participate in a glycyl lysine isopeptide (Lys-Gly) (interchain with G-Cter in DncV) cross-link. Residue C493 forms a Glycyl cysteine dithioester (Cys-Gly) (interchain with G-Cter in DncV) linkage. Residues C493, C496, and C513 each act as for E1-like domain in the active site. C513 is covalently cross-linked (Glycyl cysteine dithioester (Cys-Gly) (interchain with G-Cter in DncV)). A Glycyl lysine isopeptide (Lys-Gly) (interchain with G-Cter in DncV) cross-link involves residue K523.

It in the C-terminal section; belongs to the HesA/MoeB/ThiF family. As to quaternary structure, a Cap2 dimer is bound on either side by a DncV monomer. Post-translationally, conjugated to DncV via 5 different Lys residues and 3 Cys residues.

Functionally, CD-NTase priming component of a CBASS antiviral system. CBASS (cyclic oligonucleotide-based antiphage signaling system) provides immunity against bacteriophages. The CD-NTase protein (DncV) synthesizes cyclic nucleotides in response to infection; these serve as specific second messenger signals. The signals activate a diverse range of effectors, leading to bacterial cell death and thus abortive phage infection. A type II-A(GA) CBASS system. Its function is as follows. Conjugates DncV to itself in vitro and to other cellular proteins in vivo; conjugation requires ATP. This primes DncV, upon phage infection CdnA activates and makes cyclic nucleotides. In terms of biological role, protects E.coli against phage infection. When capV and dncV are introduced in E.coli MG1655 there is 1000-fold protection against phage P1; protection against other phage (T2, T4, T5, T6 and lambda-vir) requires the 2 subsequent genes. In another paper the capV-dncV-cap2-cap3 operon gives 10(4)-10(5)-fold protection against phages lambda, T2, T4 and T6, about 1000-fold protection against P1 and 10-fold protection against T5. The sequence is that of ATP-dependent ubiquitin transferase-like protein Cap2 from Escherichia coli (strain TW11681).